The sequence spans 363 residues: DNA polymerase IV (363 aa).

The 184-residue stretch at 14 to 197 folds into the UmuC domain; sequence IIHIDMDAFF…LPVEKFHGVG (184 aa). 2 residues coordinate Mg(2+): D18 and D115. Residue E116 is part of the active site.

Belongs to the DNA polymerase type-Y family. In terms of assembly, monomer. Requires Mg(2+) as cofactor.

The protein localises to the cytoplasm. The catalysed reaction is DNA(n) + a 2'-deoxyribonucleoside 5'-triphosphate = DNA(n+1) + diphosphate. Its function is as follows. Poorly processive, error-prone DNA polymerase involved in untargeted mutagenesis. Copies undamaged DNA at stalled replication forks, which arise in vivo from mismatched or misaligned primer ends. These misaligned primers can be extended by PolIV. Exhibits no 3'-5' exonuclease (proofreading) activity. May be involved in translesional synthesis, in conjunction with the beta clamp from PolIII. The chain is DNA polymerase IV from Lactococcus lactis subsp. lactis (strain IL1403) (Streptococcus lactis).